The sequence spans 509 residues: Lanosterol 14-alpha demethylase (509 aa).

A helical membrane pass occupies residues 30-50 (GNLLSMLLIACAFTLSLVYLF). Cys-455 is a binding site for heme.

This sequence belongs to the cytochrome P450 family. It depends on heme as a cofactor. Ubiquitinated by MARCHF6, leading to proteasomal degradation.

It localises to the endoplasmic reticulum membrane. It is found in the microsome membrane. It catalyses the reaction a 14alpha-methyl steroid + 3 reduced [NADPH--hemoprotein reductase] + 3 O2 = a Delta(14) steroid + formate + 3 oxidized [NADPH--hemoprotein reductase] + 4 H2O + 4 H(+). The catalysed reaction is lanosterol + 3 reduced [NADPH--hemoprotein reductase] + 3 O2 = 4,4-dimethyl-5alpha-cholesta-8,14,24-trien-3beta-ol + formate + 3 oxidized [NADPH--hemoprotein reductase] + 4 H2O + 4 H(+). It carries out the reaction 24,25-dihydrolanosterol + 3 reduced [NADPH--hemoprotein reductase] + 3 O2 = 4,4-dimethyl-8,14-cholestadien-3beta-ol + formate + 3 oxidized [NADPH--hemoprotein reductase] + 4 H2O + 4 H(+). The enzyme catalyses a 14alpha-methyl steroid + reduced [NADPH--hemoprotein reductase] + O2 = a 14alpha-hydroxymethyl steroid + oxidized [NADPH--hemoprotein reductase] + H2O + H(+). It catalyses the reaction a 14alpha-hydroxymethyl steroid + reduced [NADPH--hemoprotein reductase] + O2 = a 14alpha-formyl steroid + oxidized [NADPH--hemoprotein reductase] + 2 H2O + H(+). The catalysed reaction is a 14alpha-formyl steroid + reduced [NADPH--hemoprotein reductase] + O2 = a Delta(14) steroid + formate + oxidized [NADPH--hemoprotein reductase] + H2O + 2 H(+). It carries out the reaction lanosterol + reduced [NADPH--hemoprotein reductase] + O2 = 32-hydroxylanosterol + oxidized [NADPH--hemoprotein reductase] + H2O + H(+). The enzyme catalyses 32-hydroxylanosterol + reduced [NADPH--hemoprotein reductase] + O2 = 32-oxolanosterol + oxidized [NADPH--hemoprotein reductase] + 2 H2O + H(+). It catalyses the reaction 32-oxolanosterol + reduced [NADPH--hemoprotein reductase] + O2 = 4,4-dimethyl-5alpha-cholesta-8,14,24-trien-3beta-ol + formate + oxidized [NADPH--hemoprotein reductase] + H2O + 2 H(+). The catalysed reaction is 24,25-dihydrolanosterol + reduced [NADPH--hemoprotein reductase] + O2 = 32-hydroxy-24,25-dihydrolanosterol + oxidized [NADPH--hemoprotein reductase] + H2O + H(+). It carries out the reaction 32-hydroxy-24,25-dihydrolanosterol + reduced [NADPH--hemoprotein reductase] + O2 = 32-oxo-24,25-dihydrolanosterol + oxidized [NADPH--hemoprotein reductase] + 2 H2O + H(+). The enzyme catalyses 32-oxo-24,25-dihydrolanosterol + reduced [NADPH--hemoprotein reductase] + O2 = 4,4-dimethyl-8,14-cholestadien-3beta-ol + formate + oxidized [NADPH--hemoprotein reductase] + H2O + 2 H(+). Its pathway is steroid biosynthesis; zymosterol biosynthesis; zymosterol from lanosterol: step 1/6. Its activity is regulated as follows. Inhibited by azalanstat. Inhibited by azole antifungal agents ketoconazole, itraconazole and fluconazole. In terms of biological role, sterol 14alpha-demethylase that plays a critical role in the cholesterol biosynthesis pathway, being cholesterol the major sterol component in mammalian membranes as well as a precursor for bile acid and steroid hormone synthesis. Cytochrome P450 monooxygenase that catalyzes the three-step oxidative removal of the 14alpha-methyl group (C-32) of sterols such as lanosterol (lanosta-8,24-dien-3beta-ol) and 24,25-dihydrolanosterol (DHL) in the form of formate, and converts the sterols to 4,4-dimethyl-5alpha-cholesta-8,14,24-trien-3beta-ol and 4,4-dimethyl-8,14-cholestadien-3beta-ol, respectively, which are intermediates of cholesterol biosynthesis. Can also demethylate substrates not intrinsic to mammals, such as eburicol (24-methylene-24,25-dihydrolanosterol), but at a lower rate than DHL. The sequence is that of Lanosterol 14-alpha demethylase from Pongo abelii (Sumatran orangutan).